The following is a 236-amino-acid chain: EEF1A lysine methyltransferase 2 (236 aa).

Over residues 1–11 (MSSGADGGGGA) the composition is skewed to gly residues. Positions 1 to 31 (MSSGADGGGGAAVAARSDKGSPGEDGFVPSA) are disordered. The residue at position 2 (Ser-2) is an N-acetylserine. Ser-21 is subject to Phosphoserine.

The protein belongs to the class I-like SAM-binding methyltransferase superfamily. EFM4 family.

The protein localises to the cytoplasm. The protein resides in the nucleus. The catalysed reaction is L-lysyl-[protein] + 3 S-adenosyl-L-methionine = N(6),N(6),N(6)-trimethyl-L-lysyl-[protein] + 3 S-adenosyl-L-homocysteine + 3 H(+). Functionally, protein-lysine methyltransferase that selectively catalyzes the trimethylation of EEF1A at 'Lys-318'. This chain is EEF1A lysine methyltransferase 2, found in Homo sapiens (Human).